The chain runs to 340 residues: Adenosine kinase (340 aa).

Asp293 is an active-site residue.

It belongs to the carbohydrate kinase PfkB family. The cofactor is Mg(2+).

It carries out the reaction adenosine + ATP = AMP + ADP + H(+). Its pathway is purine metabolism; AMP biosynthesis via salvage pathway; AMP from adenosine: step 1/1. Functionally, ATP dependent phosphorylation of adenosine and other related nucleoside analogs to monophosphate derivatives. ADO1 does not play a major role in adenine utilization in yeast. Its physiological role could primarily be to recycle adenosine produced by the methyl cycle. This Saccharomyces cerevisiae (strain ATCC 204508 / S288c) (Baker's yeast) protein is Adenosine kinase.